A 291-amino-acid polypeptide reads, in one-letter code: Homoserine kinase (291 aa).

ATP is bound at residue 80 to 90; it reads PLARGLGSSST.

The protein belongs to the GHMP kinase family. Homoserine kinase subfamily.

The protein localises to the cytoplasm. It catalyses the reaction L-homoserine + ATP = O-phospho-L-homoserine + ADP + H(+). The protein operates within amino-acid biosynthesis; L-threonine biosynthesis; L-threonine from L-aspartate: step 4/5. Catalyzes the ATP-dependent phosphorylation of L-homoserine to L-homoserine phosphate. The polypeptide is Homoserine kinase (Lactiplantibacillus plantarum (strain ATCC BAA-793 / NCIMB 8826 / WCFS1) (Lactobacillus plantarum)).